A 319-amino-acid polypeptide reads, in one-letter code: Acetyl esterase (319 aa).

Residues 91 to 93 carry the Involved in the stabilization of the negatively charged intermediate by the formation of the oxyanion hole motif; sequence HGG. Residues S165, D262, and H292 contribute to the active site.

It belongs to the 'GDXG' lipolytic enzyme family. Homodimer. Interacts with MalT and MelA.

It is found in the cytoplasm. In terms of biological role, displays esterase activity towards short chain fatty esters (acyl chain length of up to 8 carbons). Able to hydrolyze triacetylglycerol (triacetin) and tributyrylglycerol (tributyrin), but not trioleylglycerol (triolein) or cholesterol oleate. Negatively regulates MalT activity by antagonizing maltotriose binding. Inhibits MelA galactosidase activity. In Shigella boydii serotype 4 (strain Sb227), this protein is Acetyl esterase.